The chain runs to 799 residues: 1,4-alpha-glucan-branching enzyme 2, chloroplastic/amyloplastic (799 aa).

The N-terminal 57 residues, 1–57 (MAFRVSGAVLGGAVRAPRLTGGGEGSLVFRHTGLFLTRGARVGCSGTHGAMRAAAAA), are a transit peptide targeting the chloroplast. Residues W196 and K232 each contribute to the (1,4-alpha-D-glucosyl)n site. D447 serves as the catalytic Nucleophile. The Proton donor role is filled by E502.

The protein belongs to the glycosyl hydrolase 13 family. GlgB subfamily. Monomer.

Its subcellular location is the plastid. It localises to the chloroplast. The protein localises to the amyloplast. The catalysed reaction is Transfers a segment of a (1-&gt;4)-alpha-D-glucan chain to a primary hydroxy group in a similar glucan chain.. It functions in the pathway glycan biosynthesis; starch biosynthesis. Functionally, catalyzes the formation of the alpha-1,6-glucosidic linkages in starch by scission of a 1,4-alpha-linked oligosaccharide from growing alpha-1,4-glucan chains and the subsequent attachment of the oligosaccharide to the alpha-1,6 position. In Zea mays (Maize), this protein is 1,4-alpha-glucan-branching enzyme 2, chloroplastic/amyloplastic (SBE1).